The primary structure comprises 501 residues: Betaine aldehyde dehydrogenase, chloroplastic (501 aa).

A chloroplast-targeting transit peptide spans 1–7 (MAIRVPS). 238–243 (GSTATG) serves as a coordination point for NAD(+). The active-site Proton acceptor is Glu260. Cys294 functions as the Nucleophile in the catalytic mechanism.

The protein belongs to the aldehyde dehydrogenase family. In terms of assembly, homodimer.

It localises to the plastid. The protein resides in the chloroplast. The enzyme catalyses betaine aldehyde + NAD(+) + H2O = glycine betaine + NADH + 2 H(+). Its pathway is amine and polyamine biosynthesis; betaine biosynthesis via choline pathway; betaine from betaine aldehyde: step 1/1. This is Betaine aldehyde dehydrogenase, chloroplastic (BADH4) from Amaranthus hypochondriacus (Prince-of-Wales feather).